Here is a 391-residue protein sequence, read N- to C-terminus: Zinc finger protein DPF3 (391 aa).

Over residues 152-165 (ENGDGFHDDEDFEV) the composition is skewed to acidic residues. Disordered regions lie at residues 152–200 (ENGD…PYVC) and 236–266 (LAEE…QKAP). Over residues 169–183 (KRKHRNKGRGRGSGR) the composition is skewed to basic residues. The C2H2-type zinc finger occupies 198 to 235 (YVCDNRYKQKHNSKTADSVCGKRYKNRPGLSYHYAHTH). 2 consecutive PHD-type zinc fingers follow at residues 273-333 (NDYC…CKSC) and 330-380 (CKSC…CQNL).

Component of the BAF complex. Interacts with acetylated histones H3 and H4. Component of neuron-specific chromatin remodeling complex (nBAF complex), a subfamily of ATP-dependent SWI/SNF chromatin remodeling complexes. Expressed in the heart and somites.

The protein resides in the nucleus. Muscle-specific component of the BAF complex, a multiprotein complex involved in transcriptional activation and repression of select genes by chromatin remodeling (alteration of DNA-nucleosome topology). Specifically binds acetylated lysines on histone 3 and 4. In the complex, it acts as a tissue-specific anchor between histone acetylations and methylations and chromatin remodeling. Belongs to the neuron-specific chromatin remodeling complex (nBAF complex) and may play a role in neural development. Plays an essential role in heart and skeletal muscle development. This Danio rerio (Zebrafish) protein is Zinc finger protein DPF3 (dpf3).